Reading from the N-terminus, the 757-residue chain is MDVNPTLLFLKVPAQNAISTTFPYTGDPPYSHGTGTGYTMDTVNRTHQYSERGRWTKNTETGAPQLNPIDGPLPKDNEPSGYAQTDCVLEAMAFLEESHPGIFENSCIETMEVVQQTRVDKLTQGRQTYDWTLNRNQPAATALANTIEVFRSNGLMANESGRLIDFLKDVMESMDREEVEITTHFQRKRRVRDNVTKKMVTQRTIGKKKQRLNKRSYLIRALTLNTMTKDAERGKLKRRAIATPGMQIRGFVYFVETLARSICEKLEQSGLPVGGNEKKAKLANVVRKMMTNSQDTEISFTITGDNTKWNENQNPRMFLAMITYITRNQPEWFRNILSIAPIMFSNKMARLGKGYMFESKSMKLRTQIPAEMLANIDLKYFNDSTRKKIEKIRPLLIDGTASLSPGMMMGMFNMLSTVLGVSILNLGQKRYTKTTYWWDGLQSSDDFALIVNAPNHAGIQAGVDRFYRTCKLLGINMSKKKSYINRTGTFEFTSFFYRYGFVANFSMELPSFGVSGINESADMSIGVTVIKNNMINNDLGPATAQMALQLFIKDYRYTYRCHRGDTQIQTRRSFEIKKLWEQTRSKAGLLVSDGGPNLYNIRNLHIPEVCLKWELMDEDYQGRLCNPLNPFVSHKEIESVNNAVMMPAHGPAKNMEYDAVATTHSWVPKRNRSILNTSQRGILEDEQMYQRCCNLFEKFFPSSSYRRPVGISSMVEAMVSRARIDARIDFESGRIKKEEFTEIMKTCSTIEELRRQK.

Residues 53 to 82 (GRWTKNTETGAPQLNPIDGPLPKDNEPSGY) form a disordered region. Short sequence motifs (nuclear localization signal) lie at residues 187–195 (RKRRVRDNV) and 203–216 (RTIGKKKQRLNKRS). Residues 249–256 (RGFVYFVE) are promoter-binding site. A RdRp catalytic domain is found at 286 to 483 (VRKMMTNSQD…GINMSKKKSY (198 aa)).

It belongs to the influenza viruses polymerase PB1 family. In terms of assembly, influenza RNA polymerase is composed of three subunits: PB1, PB2 and PA. Interacts (via N-terminus) with PA (via C-terminus). Interacts (via C-terminus) with PB2 (via N-terminus); this interaction is essential for transcription initiation. Interacts (via C-terminus) with human PKP2 (via N-terminus); the interaction competitively inhibits the interaction between the RNA polymerase subunits PB1 and PB2. In terms of processing, phosphorylated by host PRKCA.

It is found in the host nucleus. The protein localises to the host cytoplasm. The catalysed reaction is RNA(n) + a ribonucleoside 5'-triphosphate = RNA(n+1) + diphosphate. In terms of biological role, RNA-dependent RNA polymerase which is responsible for replication and transcription of virus RNA segments. The transcription of viral mRNAs occurs by a unique mechanism called cap-snatching. 5' methylated caps of cellular mRNAs are cleaved after 10-13 nucleotides by PA. In turn, these short capped RNAs are used as primers by PB1 for transcription of viral mRNAs. During virus replication, PB1 initiates RNA synthesis and copy vRNA into complementary RNA (cRNA) which in turn serves as a template for the production of more vRNAs. The sequence is that of RNA-directed RNA polymerase catalytic subunit from Aves (Human).